Consider the following 350-residue polypeptide: Protein-glutamate methylesterase/protein-glutamine glutaminase 1 (350 aa).

Positions 3–121 (KVLIVEDSPV…RDYDIRARDL (119 aa)) constitute a Response regulatory domain. The residue at position 54 (D54) is a 4-aspartylphosphate. A CheB-type methylesterase domain is found at 148-342 (PASGEPDIGK…PPEKIARVLV (195 aa)). Active-site residues include S170, H197, and D290.

This sequence belongs to the CheB family. In terms of processing, phosphorylated by CheA. Phosphorylation of the N-terminal regulatory domain activates the methylesterase activity.

The protein resides in the cytoplasm. The catalysed reaction is [protein]-L-glutamate 5-O-methyl ester + H2O = L-glutamyl-[protein] + methanol + H(+). It carries out the reaction L-glutaminyl-[protein] + H2O = L-glutamyl-[protein] + NH4(+). Its function is as follows. Involved in chemotaxis. Part of a chemotaxis signal transduction system that modulates chemotaxis in response to various stimuli. Catalyzes the demethylation of specific methylglutamate residues introduced into the chemoreceptors (methyl-accepting chemotaxis proteins or MCP) by CheR. Also mediates the irreversible deamidation of specific glutamine residues to glutamic acid. This Syntrophus aciditrophicus (strain SB) protein is Protein-glutamate methylesterase/protein-glutamine glutaminase 1.